An 835-amino-acid chain; its full sequence is Protein translocase subunit SecA (835 aa).

Residues Gln-85, 103–107 (GEGKT), and Asp-492 contribute to the ATP site. A disordered region spans residues 788–807 (VQGEAVHPSSDGEEAKKKPV). 4 residues coordinate Zn(2+): Cys-819, Cys-821, Cys-830, and Cys-831.

The protein belongs to the SecA family. In terms of assembly, monomer and homodimer. Part of the essential Sec protein translocation apparatus which comprises SecA, SecYEG and auxiliary proteins SecDF. Other proteins may also be involved. Requires Zn(2+) as cofactor.

The protein resides in the cell membrane. The protein localises to the cytoplasm. The enzyme catalyses ATP + H2O + cellular proteinSide 1 = ADP + phosphate + cellular proteinSide 2.. Its function is as follows. Part of the Sec protein translocase complex. Interacts with the SecYEG preprotein conducting channel. Has a central role in coupling the hydrolysis of ATP to the transfer of proteins into and across the cell membrane, serving as an ATP-driven molecular motor driving the stepwise translocation of polypeptide chains across the membrane. This Bacillus cereus (strain ATCC 10987 / NRS 248) protein is Protein translocase subunit SecA.